A 49-amino-acid chain; its full sequence is Disintegrin ocellatin (49 aa).

The Disintegrin domain maps to 1-47 (DCESGPCCDNCKFLKEGTICKMARGDNMHHYCNGKTCDCPRNPYKGE). 4 disulfides stabilise this stretch: cysteine 2–cysteine 11, cysteine 7–cysteine 32, cysteine 8–cysteine 37, and cysteine 20–cysteine 39. The Cell attachment site signature appears at 24-26 (RGD).

It belongs to the venom metalloproteinase (M12B) family. P-II subfamily. P-IIa sub-subfamily. As to quaternary structure, monomer. As to expression, expressed by the venom gland.

It is found in the secreted. In terms of biological role, inhibits ADP-induced human platelet aggregation. The polypeptide is Disintegrin ocellatin (Echis ocellatus (Ocellated saw-scaled viper)).